A 178-amino-acid polypeptide reads, in one-letter code: uncharacterized protein (178 aa).

The protein to E.coli YrdD.

This is an uncharacterized protein from Haemophilus influenzae (strain ATCC 51907 / DSM 11121 / KW20 / Rd).